We begin with the raw amino-acid sequence, 377 residues long: Guanine nucleotide-binding protein subunit beta (377 aa).

WD repeat units lie at residues 63 to 93 (GHTG…IVWN), 105 to 135 (LPCA…SIFN), 154 to 185 (GHKG…VLWD), 202 to 233 (GHTA…RLWD), 246 to 276 (CHEG…RLFD), 293 to 323 (GDIP…YVWD), and 339 to 369 (SHEG…KIWA).

The protein belongs to the WD repeat G protein beta family. As to quaternary structure, g proteins are composed of 3 units, alpha, beta and gamma.

Its subcellular location is the cell membrane. The protein localises to the endoplasmic reticulum membrane. In terms of biological role, guanine nucleotide-binding proteins (G proteins) are involved as a modulator or transducer in various transmembrane signaling systems. The beta and gamma chains are required for the GTPase activity, for replacement of GDP by GTP, and for G protein-effector interaction. In Nicotiana plumbaginifolia (Leadwort-leaved tobacco), this protein is Guanine nucleotide-binding protein subunit beta.